A 381-amino-acid polypeptide reads, in one-letter code: Succinyl-diaminopimelate desuccinylase (381 aa).

His-69 serves as a coordination point for Zn(2+). Asp-71 is a catalytic residue. Asp-103 serves as a coordination point for Zn(2+). Glu-137 functions as the Proton acceptor in the catalytic mechanism. 3 residues coordinate Zn(2+): Glu-138, Glu-166, and His-355.

It belongs to the peptidase M20A family. DapE subfamily. As to quaternary structure, homodimer. The cofactor is Zn(2+). Co(2+) serves as cofactor.

The catalysed reaction is N-succinyl-(2S,6S)-2,6-diaminopimelate + H2O = (2S,6S)-2,6-diaminopimelate + succinate. Its pathway is amino-acid biosynthesis; L-lysine biosynthesis via DAP pathway; LL-2,6-diaminopimelate from (S)-tetrahydrodipicolinate (succinylase route): step 3/3. Its function is as follows. Catalyzes the hydrolysis of N-succinyl-L,L-diaminopimelic acid (SDAP), forming succinate and LL-2,6-diaminopimelate (DAP), an intermediate involved in the bacterial biosynthesis of lysine and meso-diaminopimelic acid, an essential component of bacterial cell walls. In Rickettsia rickettsii (strain Iowa), this protein is Succinyl-diaminopimelate desuccinylase.